Reading from the N-terminus, the 725-residue chain is Kinesin-like protein KIN-8A (725 aa).

Residues 1–32 (MPVSTRSKVMKQERNEQENTNLNLPLRNPHQG) are disordered. A Kinesin motor domain is found at 151–481 (RILVFVRLRP…LHWADRAKEI (331 aa)). 243–250 (GATGAGKT) is a binding site for ATP. Coiled coils occupy residues 499–541 (EGAD…AANN) and 583–617 (ESLK…EHGL). Disordered regions lie at residues 652-672 (GSLR…RFAS) and 691-725 (SPAL…HMKH). Residues 655–665 (RPKEKEKELKS) show a composition bias toward basic and acidic residues.

It belongs to the TRAFAC class myosin-kinesin ATPase superfamily. Kinesin family. KIN-8 subfamily.

The sequence is that of Kinesin-like protein KIN-8A from Arabidopsis thaliana (Mouse-ear cress).